The following is a 503-amino-acid chain: Probable mitochondrial-processing peptidase subunit alpha-1, mitochondrial (503 aa).

A mitochondrion-targeting transit peptide spans Met-1 to Pro-59.

Belongs to the peptidase M16 family. Heterodimer of alpha and beta subunits, forming the mitochondrial processing protease (MPP) in which subunit alpha is involved in substrate recognition and binding and subunit beta is the catalytic subunit. Component of the ubiquinol-cytochrome c oxidoreductase (cytochrome b-c1 complex, complex III, CIII), a multisubunit enzyme composed of 10 subunits. The complex is composed of 3 respiratory subunits cytochrome b (MT-CYB), cytochrome c1 (CYC1-1 or CYC1-2) and Rieske protein (UCR1-1 or UCR1-2), 2 core protein subunits MPPalpha1 (or MPPalpha2) and MPPB, and 5 low-molecular weight protein subunits QCR7-1 (or QCR7-2), UCRQ-1 (or UCRQ-2), QCR9, UCRY and probably QCR6-1 (or QCR6-2). The complex exists as an obligatory dimer and forms supercomplexes (SCs) in the inner mitochondrial membrane with NADH-ubiquinone oxidoreductase (complex I, CI), resulting in different assemblies (supercomplexes SCI(1)III(2) and SCI(2)III(4)).

The protein localises to the mitochondrion matrix. The protein resides in the mitochondrion inner membrane. Its function is as follows. Substrate recognition and binding subunit of the essential mitochondrial processing protease (MPP), which cleaves the mitochondrial sequence off newly imported precursors proteins. In terms of biological role, component of the ubiquinol-cytochrome c oxidoreductase, a multisubunit transmembrane complex that is part of the mitochondrial electron transport chain which drives oxidative phosphorylation. The respiratory chain contains 3 multisubunit complexes succinate dehydrogenase (complex II, CII), ubiquinol-cytochrome c oxidoreductase (cytochrome b-c1 complex, complex III, CIII) and cytochrome c oxidase (complex IV, CIV), that cooperate to transfer electrons derived from NADH and succinate to molecular oxygen, creating an electrochemical gradient over the inner membrane that drives transmembrane transport and the ATP synthase. The cytochrome b-c1 complex catalyzes electron transfer from ubiquinol to cytochrome c, linking this redox reaction to translocation of protons across the mitochondrial inner membrane, with protons being carried across the membrane as hydrogens on the quinol. In the process called Q cycle, 2 protons are consumed from the matrix, 4 protons are released into the intermembrane space and 2 electrons are passed to cytochrome c. This chain is Probable mitochondrial-processing peptidase subunit alpha-1, mitochondrial (MPPalpha1), found in Arabidopsis thaliana (Mouse-ear cress).